Here is a 227-residue protein sequence, read N- to C-terminus: Cytidylate kinase (227 aa).

Residue 10-18 (GPASSGKST) participates in ATP binding.

Belongs to the cytidylate kinase family. Type 1 subfamily.

It localises to the cytoplasm. It catalyses the reaction CMP + ATP = CDP + ADP. The enzyme catalyses dCMP + ATP = dCDP + ADP. In Streptococcus agalactiae serotype V (strain ATCC BAA-611 / 2603 V/R), this protein is Cytidylate kinase.